The chain runs to 415 residues: Lupus La protein homolog (415 aa).

Residues 7 to 99 (NEKMTALEAK…RRSPSRPLPE (93 aa)) enclose the HTH La-type RNA-binding domain. Residues Ser92 and Ser94 each carry the phosphoserine modification. In terms of domain architecture, RRM spans 111–187 (RSVYIKGFPT…TNLLILFKED (77 aa)). Lys116 carries the N6-acetyllysine modification. Thr120 carries the post-translational modification Phosphothreonine. N6-acetyllysine is present on residues Lys128, Lys327, and Lys356. The xRRM domain occupies 226–346 (EGKMGCLLKF…GRFKGSHVFT (121 aa)). A disordered region spans residues 349-415 (RRFKGKGKGN…KKRENGARDK (67 aa)). The residue at position 377 (Thr377) is a Phosphothreonine. The span at 377–415 (TRFDDDDRRRGPMKRGRDGRDREEPASKHKKRENGARDK) shows a compositional bias: basic and acidic residues.

Interacts with DDX15. May interact with RUFY1. Phosphorylated.

The protein localises to the nucleus. Binds to the 3' poly(U) terminus of nascent RNA polymerase III transcripts, protecting them from exonuclease digestion and facilitating their folding and maturation. The chain is Lupus La protein homolog (Ssb) from Mus musculus (Mouse).